The primary structure comprises 174 residues: Granulocyte colony-stimulating factor (174 aa).

Cystine bridges form between Cys-36–Cys-42 and Cys-64–Cys-74. Thr-133 carries an O-linked (GalNAc...) threonine glycan.

Belongs to the IL-6 superfamily. As to quaternary structure, monomer. In terms of processing, O-glycosylated.

It localises to the secreted. In terms of biological role, granulocyte/macrophage colony-stimulating factors are cytokines that act in hematopoiesis by controlling the production, differentiation, and function of 2 related white cell populations of the blood, the granulocytes and the monocytes-macrophages. This CSF induces granulocytes. The protein is Granulocyte colony-stimulating factor (CSF3) of Ovis aries (Sheep).